The primary structure comprises 267 residues: NAD kinase 2 (267 aa).

Asp50 functions as the Proton acceptor in the catalytic mechanism. Residues 50 to 51 (DG), Lys55, 122 to 123 (NE), Arg149, Asp151, 162 to 167 (TAYNKS), and Ala186 contribute to the NAD(+) site.

It belongs to the NAD kinase family. A divalent metal cation serves as cofactor.

The protein resides in the cytoplasm. The enzyme catalyses NAD(+) + ATP = ADP + NADP(+) + H(+). Its function is as follows. Involved in the regulation of the intracellular balance of NAD and NADP, and is a key enzyme in the biosynthesis of NADP. Catalyzes specifically the phosphorylation on 2'-hydroxyl of the adenosine moiety of NAD to yield NADP. This Listeria monocytogenes serovar 1/2a (strain ATCC BAA-679 / EGD-e) protein is NAD kinase 2.